Reading from the N-terminus, the 296-residue chain is Cytidine deaminase (296 aa).

CMP/dCMP-type deaminase domains are found at residues 47–167 (TEAE…FGPK) and 186–296 (DSSD…VDPV). 88 to 90 (NLE) contributes to the substrate binding site. Histidine 101 lines the Zn(2+) pocket. Glutamate 103 functions as the Proton donor in the catalytic mechanism. Residues cysteine 128 and cysteine 131 each coordinate Zn(2+).

Belongs to the cytidine and deoxycytidylate deaminase family. In terms of assembly, homodimer. The cofactor is Zn(2+).

It carries out the reaction cytidine + H2O + H(+) = uridine + NH4(+). It catalyses the reaction 2'-deoxycytidine + H2O + H(+) = 2'-deoxyuridine + NH4(+). This enzyme scavenges exogenous and endogenous cytidine and 2'-deoxycytidine for UMP synthesis. The chain is Cytidine deaminase from Shewanella sp. (strain MR-7).